The following is a 279-amino-acid chain: Urease accessory protein UreD (279 aa).

Belongs to the UreD family. UreD, UreF and UreG form a complex that acts as a GTP-hydrolysis-dependent molecular chaperone, activating the urease apoprotein by helping to assemble the nickel containing metallocenter of UreC. The UreE protein probably delivers the nickel.

It localises to the cytoplasm. Its function is as follows. Required for maturation of urease via the functional incorporation of the urease nickel metallocenter. This Pseudomonas fluorescens (strain ATCC BAA-477 / NRRL B-23932 / Pf-5) protein is Urease accessory protein UreD.